Here is a 60-residue protein sequence, read N- to C-terminus: Metallothionein A (60 aa).

The segment at 1–28 is beta; it reads MDPCDCSKSGTCNCGGSCTCTNCSCKSC. A divalent metal cation contacts are provided by Cys4, Cys6, Cys12, Cys14, Cys18, Cys20, Cys23, Cys25, Cys28, Cys32, Cys33, Cys35, Cys36, Cys40, Cys43, Cys47, Cys49, Cys54, Cys58, and Cys59. The segment at 29–60 is alpha; the sequence is KKSCCPCCPSGCTKCASGCVCKGKTCDTSCCQ.

This sequence belongs to the metallothionein superfamily. Type 1 family.

Metallothioneins have a high content of cysteine residues that bind various heavy metals. The chain is Metallothionein A (mta) from Chionodraco hamatus (Antarctic teleost icefish).